The following is a 660-amino-acid chain: ATPase-like fidgetin (660 aa).

Disordered stretches follow at residues 141 to 186 and 209 to 334; these read KQIY…EDPF and ALSS…ADSK. Over residues 145 to 161 the composition is skewed to low complexity; it reads SKHSPPSTSTSSIVSSS. Phosphoserine is present on Ser177. Residues 213 to 239 show a composition bias toward polar residues; that stretch reads DTGRSATMNSTTFPTAMKSQSTTKPTL. Residues 240-255 show a composition bias toward low complexity; that stretch reads SNSVSSPSIQVSNNQN. Over residues 301-313 the composition is skewed to polar residues; the sequence is LNSSHDTLGSSTR. Residues 314 to 333 are compositionally biased toward low complexity; the sequence is PSSADTAGSPATSPPATADS. Residue 419-426 participates in ATP binding; that stretch reads GPPGTGKT.

This sequence belongs to the AAA ATPase family.

The protein localises to the nucleus. In Schizosaccharomyces pombe (strain 972 / ATCC 24843) (Fission yeast), this protein is ATPase-like fidgetin (alf1).